Consider the following 343-residue polypeptide: Lactamase-like protein nscB (343 aa).

Zn(2+) is bound by residues His118, His120, Asp122, and His123. Asp122 (proton donor/acceptor) is an active-site residue.

It belongs to the metallo-beta-lactamase superfamily. Requires Zn(2+) as cofactor.

The protein operates within secondary metabolite biosynthesis. Functionally, lactamase-like protein; part of the gene cluster that mediates the biosynthesis of neosartoricin B, a prenylated anthracenone that probably exhibits T-cell antiproliferative activity, suggestive of a physiological role as an immunosuppressive agent. The non-reducing polyketide synthase nscA probably synthesizes and cyclizes the decaketide backbone. The hydrolase nscB then mediates the product release through hydrolysis followed by spontaneous decarboxylation. The prenyltransferase nscD catalyzes the addition of the dimethylallyl group to the aromatic C5. The FAD-dependent monooxygenase nscC is then responsible for the stereospecific hydroxylation at C2. Neosartoricin B can be converted into two additional compounds neosartoricins C and D. Neosartoricin C is a spirocyclic compound that is cyclized through the attack of C3 hydroxyl on C14, followed by dehydration. On the other hand, neosartoricin D is a further cyclized compound in which attack of C2 on C14 in neosartoricin C results in the formation of the acetal-containing dioxabicyclo-octanone ring. Both of these compounds are novel and possibly represent related metabolites of the gene cluster. This is Lactamase-like protein nscB from Arthroderma otae (strain ATCC MYA-4605 / CBS 113480) (Microsporum canis).